A 1362-amino-acid chain; its full sequence is Bromodomain-containing protein 4 (1362 aa).

The interval 1 to 58 (MSAESGPGTRLRNLPVMGDGLETSQMSTTQAQAQPQPANAASTNPPPPETSNPNKPKR) is disordered. Positions 23-43 (TSQMSTTQAQAQPQPANAAST) are enriched in low complexity. In terms of domain architecture, Bromo 1 spans 58–164 (RQTNQLQYLL…KLFLQKINEL (107 aa)). A Glycyl lysine isopeptide (Lys-Gly) (interchain with G-Cter in SUMO2) cross-link involves residue lysine 99. 3 disordered regions span residues 174–229 (VQAK…PAVT), 242–352 (VPPQ…KVSE), and 463–615 (EPVV…YEEK). Residues 197–211 (PNTTQASTPPQTQTP) are compositionally biased toward low complexity. Pro residues-rich tracts occupy residues 212–227 (QPNPPPVQATPHPFPA) and 243–266 (PPQPLQTPPPVPPQPQPPPAPAPQ). The span at 320 to 336 (QRRESSRPVKPPKKDVP) shows a compositional bias: basic and acidic residues. Residues 348–457 (SKVSEQLKCC…DVFEMRFAKM (110 aa)) enclose the Bromo 2 domain. Serine 470 is modified (phosphoserine). Residues 478–497 (KVVAPPSSSDSSSDSSSDSD) show a composition bias toward low complexity. Phosphoserine; by CK2 occurs at positions 484, 488, 492, 494, 498, 499, and 503. Residues 484-503 (SSSDSSSDSSSDSDSSTDDS) are NPS region. The tract at residues 524 to 579 (QLAALSQPQQNKPKKKEKDKKEKKKEKHKRKEEVEENKKSKAKEPPPKKTKKNNSS) is BID region. Residues 535–553 (KPKKKEKDKKEKKKEKHKR) show a composition bias toward basic residues. Residues 554 to 570 (KEEVEENKKSKAKEPPP) are compositionally biased toward basic and acidic residues. Residue lysine 585 forms a Glycyl lysine isopeptide (Lys-Gly) (interchain with G-Cter in SUMO2) linkage. An NET domain is found at 600–682 (ESEEEDKCKP…SCLRKKRKPQ (83 aa)). Residue serine 601 is modified to Phosphoserine. The segment covering 605–615 (DKCKPMSYEEK) has biased composition (basic and acidic residues). Residues lysine 645 and lysine 694 each participate in a glycyl lysine isopeptide (Lys-Gly) (interchain with G-Cter in SUMO2) cross-link. The interval 674–1100 (CLRKKRKPQA…PKKQELRAAS (427 aa)) is disordered. Positions 699–712 (SSSESESSSESSSS) are enriched in low complexity. Basic residues predominate over residues 724-744 (KSKKKGHPGREQKKHHHHHHQ). Composition is skewed to pro residues over residues 751–785 (APVPQQPPPPPQQPPPPPPPQQQQQPPPPPPPPSM), 833–846 (PELPPHLPQPPEHS), and 881–890 (PPKPARPPAV). Residues 926 to 936 (MQMQLYLQQLQ) show a composition bias toward low complexity. Pro residues-rich tracts occupy residues 953–964 (QPPPPLPPPPHP), 973–996 (QPPPPPPPQPQPPPQQQHQPPPRP), and 1010–1034 (QPPPPQGQQPPHPPPGQQPPPPQPA). The span at 1041–1050 (QHHHSPRHHK) shows a compositional bias: basic residues. A C-terminal (CTD) region region spans residues 1047–1362 (RHHKSDPYST…LLSIFEENLF (316 aa)). Residue lysine 1050 forms a Glycyl lysine isopeptide (Lys-Gly) (interchain with G-Cter in SUMO2) linkage. Positions 1071-1091 (PQMSQFQSLTHQSPPQQNVQP) are enriched in polar residues. The residue at position 1111 (lysine 1111) is an N6-acetyllysine; alternate. Lysine 1111 participates in a covalent cross-link: Glycyl lysine isopeptide (Lys-Gly) (interchain with G-Cter in SUMO1); alternate. Residue lysine 1111 forms a Glycyl lysine isopeptide (Lys-Gly) (interchain with G-Cter in SUMO2); alternate linkage. A disordered region spans residues 1116–1339 (HSPIIRSEPF…KREQERRRRE (224 aa)). Phosphoserine is present on residues serine 1117 and serine 1126. Over residues 1175–1196 (PDKDKQKQEPKTPVAPKKDLKI) the composition is skewed to basic and acidic residues. Lysine 1197 is covalently cross-linked (Glycyl lysine isopeptide (Lys-Gly) (interchain with G-Cter in SUMO2)). Phosphoserine is present on residues serine 1201 and serine 1204. The segment covering 1211 to 1223 (TTPSSTAKSSSDS) has biased composition (low complexity). A compositionally biased stretch (basic and acidic residues) spans 1225–1284 (EQFRRAAREKEEREKALKAQAEHAEKEKERLRQERMRSREDEDALEQARRAHEEARRRQE). The segment covering 1285–1313 (QQQQQRQEQQQQQQQQAAAVAAAATPQAQ) has biased composition (low complexity). Positions 1323–1339 (QQRELARKREQERRRRE) are enriched in basic and acidic residues.

The protein belongs to the BET family. In terms of assembly, interacts with p53/TP53; the interaction is direct. Interacts (via CTD region) with CDK9 and CCNT1, acting as an associated component of P-TEFb complex. Interacts with RELA (when acetylated at 'Lys-310'). Interacts (via NET domain) with NSD3, CHD4, BICRA and ATAD5. The interaction with BICRA bridges BRD4 to the GBAF complex. Interacts (via NET domain) with JMJD6 (via JmjC and N-terminal domains); the interaction is stronger in presence of ssRNA and recruits JMJD6 on distal enhancers. Interacts with NSD3. Interacts with NIPBL. As to quaternary structure, interacts with SMC2. Interacts with NCAPD3. (Microbial infection) Interacts with bovine papillomavirus type 1 regulatory protein E2. This interactions may serve for the tethering of viral genomes to host mitotic chromosomes allowing successful partitioning of the viral genome during cell division. In terms of assembly, (Microbial infection) Interacts with Epstein-Barr virus (EBV) protein EBNA1; this interaction facilitates transcriptional activation by EBNA1. As to quaternary structure, (Microbial infection) Interacts with human herpes virus-8 (HHV-8) protein LANA. Post-translationally, phosphorylation by CK2 disrupt the intramolecular binding between the bromo domain 2 and the NPS region and promotes binding between the NPS and the BID regions, leading to activate the protein and promote binding to acetylated histones. In absence of phosphorylation, BRD4 does not localize to p53/TP53 target gene promoters, phosphorylation promoting recruitment to p53/TP53 target promoters. Ubiquitously expressed.

It localises to the nucleus. Its subcellular location is the chromosome. Inhibited by JQ1, a thieno-triazolo-1,4-diazepine derivative, which specifically inhibits members of the BET family (BRD2, BRD3 and BRD4). The first bromo domain is inhibited by GSK778 (iBET-BD1), which specifically inhibits the first bromo domain of members of the BET family (BRD2, BRD3 and BRD4). The second bromo domain is inhibited by ABBV-744, which specifically inhibits the second bromo domain of members of the BET family (BRD2, BRD3 and BRD4). The second bromo domain is inhibited by GSK046 (iBET-BD2), which specifically inhibits the second bromo domain of members of the BET family (BRD2, BRD3 and BRD4). In terms of biological role, chromatin reader protein that recognizes and binds acetylated histones and plays a key role in transmission of epigenetic memory across cell divisions and transcription regulation. Remains associated with acetylated chromatin throughout the entire cell cycle and provides epigenetic memory for postmitotic G1 gene transcription by preserving acetylated chromatin status and maintaining high-order chromatin structure. During interphase, plays a key role in regulating the transcription of signal-inducible genes by associating with the P-TEFb complex and recruiting it to promoters. Also recruits P-TEFb complex to distal enhancers, so called anti-pause enhancers in collaboration with JMJD6. BRD4 and JMJD6 are required to form the transcriptionally active P-TEFb complex by displacing negative regulators such as HEXIM1 and 7SKsnRNA complex from P-TEFb, thereby transforming it into an active form that can then phosphorylate the C-terminal domain (CTD) of RNA polymerase II. Regulates differentiation of naive CD4(+) T-cells into T-helper Th17 by promoting recruitment of P-TEFb to promoters. Promotes phosphorylation of 'Ser-2' of the C-terminal domain (CTD) of RNA polymerase II. According to a report, directly acts as an atypical protein kinase and mediates phosphorylation of 'Ser-2' of the C-terminal domain (CTD) of RNA polymerase II; these data however need additional evidences in vivo. In addition to acetylated histones, also recognizes and binds acetylated RELA, leading to further recruitment of the P-TEFb complex and subsequent activation of NF-kappa-B. Also acts as a regulator of p53/TP53-mediated transcription: following phosphorylation by CK2, recruited to p53/TP53 specific target promoters. Functionally, acts as a chromatin insulator in the DNA damage response pathway. Inhibits DNA damage response signaling by recruiting the condensin-2 complex to acetylated histones, leading to chromatin structure remodeling, insulating the region from DNA damage response by limiting spreading of histone H2AX/H2A.x phosphorylation. The sequence is that of Bromodomain-containing protein 4 (BRD4) from Homo sapiens (Human).